A 1758-amino-acid polypeptide reads, in one-letter code: Y' element ATP-dependent helicase YIL177C (1758 aa).

The Helicase ATP-binding domain occupies Glu668 to Ala845. Ala681–Thr688 serves as a coordination point for ATP. The region spanning Ala900–Gly1051 is the Helicase C-terminal domain. Residues Asn1142–Ser1360 are compositionally biased toward low complexity. The interval Asn1142–Lys1384 is disordered. Basic and acidic residues predominate over residues Ala1361–Lys1384.

It belongs to the helicase family. Yeast subtelomeric Y' repeat subfamily.

Functionally, catalyzes DNA unwinding and is involved in telomerase-independent telomere maintenance. The sequence is that of Y' element ATP-dependent helicase YIL177C from Saccharomyces cerevisiae (strain ATCC 204508 / S288c) (Baker's yeast).